We begin with the raw amino-acid sequence, 362 residues long: Histidinol-phosphate aminotransferase (362 aa).

Lysine 222 carries the N6-(pyridoxal phosphate)lysine modification.

Belongs to the class-II pyridoxal-phosphate-dependent aminotransferase family. Histidinol-phosphate aminotransferase subfamily. Homodimer. Pyridoxal 5'-phosphate is required as a cofactor.

It carries out the reaction L-histidinol phosphate + 2-oxoglutarate = 3-(imidazol-4-yl)-2-oxopropyl phosphate + L-glutamate. Its pathway is amino-acid biosynthesis; L-histidine biosynthesis; L-histidine from 5-phospho-alpha-D-ribose 1-diphosphate: step 7/9. This is Histidinol-phosphate aminotransferase from Shewanella amazonensis (strain ATCC BAA-1098 / SB2B).